Reading from the N-terminus, the 272-residue chain is Cytochrome c1 (272 aa).

Residues 1–24 (MTTIVKRALVAAGMVLAIGGAAQA) form the signal peptide. Heme c contacts are provided by C61, C64, H65, and M200. The chain crosses the membrane as a helical span at residues 244–261 (LGLKVLLFLGVLTAMLLA).

As to quaternary structure, the main subunits of complex b-c1 are: cytochrome b, cytochrome c1 and the Rieske protein. In terms of processing, binds 1 heme c group covalently per subunit.

Its subcellular location is the cell membrane. Functionally, component of the ubiquinol-cytochrome c reductase complex (complex III or cytochrome b-c1 complex), which is a respiratory chain that generates an electrochemical potential coupled to ATP synthesis. This chain is Cytochrome c1 (petC), found in Rhodospirillum rubrum.